We begin with the raw amino-acid sequence, 98 residues long: uncharacterized protein (98 aa).

The protein belongs to the HesB/IscA family.

This is an uncharacterized protein from Staphylococcus aureus (strain USA300).